The chain runs to 308 residues: NAD-dependent protein deacylase SIR4 (308 aa).

A mitochondrion-targeting transit peptide spans 1-16 (MAATKLHPALRNAIRA). In terms of domain architecture, Deacetylase sirtuin-type spans 28–308 (TFDVQEGIKL…EVLPAALRQL (281 aa)). NAD(+)-binding positions include 53–73 (GAGI…RPPH) and 129–132 (QNVD). The active-site Proton acceptor is H147. C155, C158, C211, and C214 together coordinate Zn(2+). Residues 251–253 (GTS), 277–279 (NSG), and I297 each bind NAD(+).

The protein belongs to the sirtuin family. Class II subfamily. The cofactor is Zn(2+).

Its subcellular location is the mitochondrion matrix. The catalysed reaction is N(6)-acetyl-L-lysyl-[protein] + NAD(+) + H2O = 2''-O-acetyl-ADP-D-ribose + nicotinamide + L-lysyl-[protein]. NAD-dependent protein deacylase. Catalyzes the NAD-dependent hydrolysis of acyl groups from lysine residues. The protein is NAD-dependent protein deacylase SIR4 of Monosiga brevicollis (Choanoflagellate).